The primary structure comprises 383 residues: tRNA-specific 2-thiouridylase MnmA (383 aa).

ATP contacts are provided by residues 31–38 (GLSGGVDS) and Leu-57. Residue Cys-118 is the Nucleophile of the active site. A disulfide bond links Cys-118 and Cys-217. Gly-143 lines the ATP pocket. The segment at 167–169 (KDQ) is interaction with tRNA. Cys-217 acts as the Cysteine persulfide intermediate in catalysis. The segment at 322 to 323 (RY) is interaction with tRNA.

It belongs to the MnmA/TRMU family.

The protein resides in the cytoplasm. The catalysed reaction is S-sulfanyl-L-cysteinyl-[protein] + uridine(34) in tRNA + AH2 + ATP = 2-thiouridine(34) in tRNA + L-cysteinyl-[protein] + A + AMP + diphosphate + H(+). Functionally, catalyzes the 2-thiolation of uridine at the wobble position (U34) of tRNA, leading to the formation of s(2)U34. The sequence is that of tRNA-specific 2-thiouridylase MnmA from Synechococcus sp. (strain RCC307).